Consider the following 48-residue polypeptide: M-oxotoxin-Ot1a (48 aa).

As to expression, expressed by the venom gland.

The protein resides in the secreted. It localises to the target cell membrane. In terms of biological role, disrupts cell membranes, particularly those rich in phosphocholine, through formation of pores. Has antimicrobial activity against Gram-negative bacterium E.coli, Gram-positive bacteria B.subtilis and S.aureus, and hemolytic activity against sheep, pig and guinea pig erythrocytes. Has insecticidal activity against S.frugiperda ovarian cells by opening non-selective ion channels. Enhances the insecticidal activity of spider venom neurotoxic peptides. The sequence is that of M-oxotoxin-Ot1a from Oxyopes takobius (Lynx spider).